The chain runs to 277 residues: Probable enoyl-CoA hydratase, mitochondrial (277 aa).

The transit peptide at 1-42 (MLKQVIKTVSSSQAPKKYFFKQFCTSTTEKKGRVGLVTLNRP) directs the protein to the mitochondrion. Substrate is bound by residues 85–88 (ADIK) and glycine 128.

The protein belongs to the enoyl-CoA hydratase/isomerase family. Homohexamer; dimer of trimers.

It is found in the mitochondrion matrix. It carries out the reaction a (3S)-3-hydroxyacyl-CoA = a (2E)-enoyl-CoA + H2O. The enzyme catalyses a 4-saturated-(3S)-3-hydroxyacyl-CoA = a (3E)-enoyl-CoA + H2O. It catalyses the reaction (3S)-3-hydroxybutanoyl-CoA = (2E)-butenoyl-CoA + H2O. The catalysed reaction is 3-hydroxyisovaleryl-CoA = 3-methylbut-2-enoyl-CoA + H2O. It carries out the reaction 3-hydroxypropanoyl-CoA = acryloyl-CoA + H2O. The enzyme catalyses 3-hydroxybutanoyl-CoA = (2E)-butenoyl-CoA + H2O. It functions in the pathway lipid metabolism; fatty acid beta-oxidation. Functionally, straight-chain enoyl-CoA thioesters from C4 up to at least C16 are processed, although with decreasing catalytic rate. This is Probable enoyl-CoA hydratase, mitochondrial (echs1) from Dictyostelium discoideum (Social amoeba).